Reading from the N-terminus, the 313-residue chain is Ribosomal RNA small subunit methyltransferase H (313 aa).

S-adenosyl-L-methionine contacts are provided by residues 35-37 (GGH), Asp55, Phe81, Asp103, and Gln110.

Belongs to the methyltransferase superfamily. RsmH family.

The protein localises to the cytoplasm. The enzyme catalyses cytidine(1402) in 16S rRNA + S-adenosyl-L-methionine = N(4)-methylcytidine(1402) in 16S rRNA + S-adenosyl-L-homocysteine + H(+). In terms of biological role, specifically methylates the N4 position of cytidine in position 1402 (C1402) of 16S rRNA. The sequence is that of Ribosomal RNA small subunit methyltransferase H from Pseudomonas aeruginosa (strain ATCC 15692 / DSM 22644 / CIP 104116 / JCM 14847 / LMG 12228 / 1C / PRS 101 / PAO1).